The following is a 333-amino-acid chain: Protein APEM9 (333 aa).

Topologically, residues 1-90 are cytoplasmic; sequence MEATDIWGEI…ELRDVFGEVA (90 aa). The helical transmembrane segment at 91-102 threads the bilayer; the sequence is AIPVQVLLTGVC. Topologically, residues 103 to 268 are peroxisomal; the sequence is LQISNGSYLG…KVGNTQFSMS (166 aa). A helical membrane pass occupies residues 269–285; that stretch reads RGKVAVSLVGLIICYAL. Topologically, residues 286–333 are cytoplasmic; that stretch reads KRKRAALIRIIRRQMESTRKAIVDFWKLAFSYQVNPLAAIQSIPSTTT.

As to quaternary structure, interacts with PEX6 and PEX19-1, but not with PEX1. Interacts (via N-terminus) with PEX13, and (via N-terminus and C-terminus) with PEX16. As to expression, expressed in roots, leaves, stems, flowers, buds and fruits.

Its subcellular location is the peroxisome membrane. In terms of biological role, involved in peroxisome biogenesis and matrix protein import. Required for pollen maturation and in vivo germination via its role in peroxisomal function, which partially involves jasmonic acid biosynthesis. Transported to peroxisomes via the interaction with PEX19-1. Required for peroxisomal protein import by acting as an anchoring protein for the AAA ATPase complex, which consists of PEX1 and PEX6. This is Protein APEM9 from Arabidopsis thaliana (Mouse-ear cress).